We begin with the raw amino-acid sequence, 381 residues long: ELMO domain-containing protein 3 (381 aa).

Residues 1–31 (MNEKSCSFHSKEELRDGQGERLSAGYSPSYD) are disordered. Over residues 9-19 (HSKEELRDGQG) the composition is skewed to basic and acidic residues. One can recognise an ELMO domain in the interval 170-324 (VHGRVLQTIY…ELEVLAKKSP (155 aa)).

In terms of tissue distribution, both isoform 1 and isoform 6 are widely expressed.

The protein localises to the cell projection. It localises to the stereocilium. Its subcellular location is the kinocilium. The protein resides in the cytoplasm. It is found in the cytoskeleton. Acts as a GTPase-activating protein (GAP) for ARL2 with low specific activity. The chain is ELMO domain-containing protein 3 (ELMOD3) from Homo sapiens (Human).